The chain runs to 346 residues: Small ribosomal subunit biogenesis GTPase RsgA 1 (346 aa).

The 156-residue stretch at 93–248 folds into the CP-type G domain; that stretch reads AEQLIAANFD…VIDTPGMREF (156 aa). Residues 138-141 and 190-198 contribute to the GTP site; these read TKAD and GSSGVGKSS. The Zn(2+) site is built by Cys-271, Cys-276, His-278, and Cys-284.

The protein belongs to the TRAFAC class YlqF/YawG GTPase family. RsgA subfamily. As to quaternary structure, monomer. Associates with 30S ribosomal subunit, binds 16S rRNA. Zn(2+) serves as cofactor.

It localises to the cytoplasm. Its function is as follows. One of several proteins that assist in the late maturation steps of the functional core of the 30S ribosomal subunit. Helps release RbfA from mature subunits. May play a role in the assembly of ribosomal proteins into the subunit. Circularly permuted GTPase that catalyzes slow GTP hydrolysis, GTPase activity is stimulated by the 30S ribosomal subunit. The sequence is that of Small ribosomal subunit biogenesis GTPase RsgA 1 from Listeria monocytogenes serovar 1/2a (strain ATCC BAA-679 / EGD-e).